Here is a 294-residue protein sequence, read N- to C-terminus: 4-hydroxy-tetrahydrodipicolinate synthase (294 aa).

Position 45 (T45) interacts with pyruvate. Y133 functions as the Proton donor/acceptor in the catalytic mechanism. K161 (schiff-base intermediate with substrate) is an active-site residue. I203 contributes to the pyruvate binding site.

This sequence belongs to the DapA family. Homotetramer; dimer of dimers.

Its subcellular location is the cytoplasm. The catalysed reaction is L-aspartate 4-semialdehyde + pyruvate = (2S,4S)-4-hydroxy-2,3,4,5-tetrahydrodipicolinate + H2O + H(+). It participates in amino-acid biosynthesis; L-lysine biosynthesis via DAP pathway; (S)-tetrahydrodipicolinate from L-aspartate: step 3/4. Catalyzes the condensation of (S)-aspartate-beta-semialdehyde [(S)-ASA] and pyruvate to 4-hydroxy-tetrahydrodipicolinate (HTPA). This chain is 4-hydroxy-tetrahydrodipicolinate synthase, found in Buchnera aphidicola subsp. Acyrthosiphon pisum (strain 5A).